A 195-amino-acid chain; its full sequence is GTP cyclohydrolase 1 (195 aa).

3 residues coordinate Zn(2+): Cys-86, His-89, and Cys-158.

This sequence belongs to the GTP cyclohydrolase I family. Homomer.

It catalyses the reaction GTP + H2O = 7,8-dihydroneopterin 3'-triphosphate + formate + H(+). It functions in the pathway cofactor biosynthesis; 7,8-dihydroneopterin triphosphate biosynthesis; 7,8-dihydroneopterin triphosphate from GTP: step 1/1. The chain is GTP cyclohydrolase 1 from Ruminiclostridium cellulolyticum (strain ATCC 35319 / DSM 5812 / JCM 6584 / H10) (Clostridium cellulolyticum).